The sequence spans 158 residues: Lipoprotein signal peptidase (158 aa).

Transmembrane regions (helical) follow at residues 12 to 32 (LFWWVAGLALASDRLTKAWIV), 46 to 66 (IIPGVFHITYVTNTGAAFSLF), and 71 to 91 (IWLRWLSLIVSLGLITWAILG). Active-site residues include aspartate 124 and aspartate 140. The helical transmembrane segment at 135-155 (VFNVADIAINIGIVCLLWSAW) threads the bilayer.

Belongs to the peptidase A8 family.

Its subcellular location is the cell inner membrane. It catalyses the reaction Release of signal peptides from bacterial membrane prolipoproteins. Hydrolyzes -Xaa-Yaa-Zaa-|-(S,diacylglyceryl)Cys-, in which Xaa is hydrophobic (preferably Leu), and Yaa (Ala or Ser) and Zaa (Gly or Ala) have small, neutral side chains.. It participates in protein modification; lipoprotein biosynthesis (signal peptide cleavage). Functionally, this protein specifically catalyzes the removal of signal peptides from prolipoproteins. The polypeptide is Lipoprotein signal peptidase (Thermosynechococcus vestitus (strain NIES-2133 / IAM M-273 / BP-1)).